Here is a 136-residue protein sequence, read N- to C-terminus: Plastocyanin (136 aa).

The signal sequence occupies residues 1 to 34; it reads MSLVFNLVKRLQLILLSLVVGGLAVAFLSNPAAA. The region spanning 35–136 is the Plastocyanin-like domain; the sequence is ETYIVKMGSD…GMVGKIIVNG (102 aa). 4 residues coordinate Cu cation: His-73, Cys-120, His-123, and Met-128.

Belongs to the plastocyanin family. Requires Cu(2+) as cofactor.

It localises to the cellular thylakoid membrane. Participates in electron transfer between P700 and the cytochrome b6-f complex in photosystem I. This Synechococcus sp. (strain JA-2-3B'a(2-13)) (Cyanobacteria bacterium Yellowstone B-Prime) protein is Plastocyanin.